The primary structure comprises 390 residues: uncharacterized protein (390 aa).

This sequence belongs to the peptidase M24 family.

This is an uncharacterized protein from Sinorhizobium fredii (strain NBRC 101917 / NGR234).